A 156-amino-acid chain; its full sequence is Small ribosomal subunit protein uS7 (156 aa).

Belongs to the universal ribosomal protein uS7 family. Part of the 30S ribosomal subunit. Contacts proteins S9 and S11.

Its function is as follows. One of the primary rRNA binding proteins, it binds directly to 16S rRNA where it nucleates assembly of the head domain of the 30S subunit. Is located at the subunit interface close to the decoding center, probably blocks exit of the E-site tRNA. This is Small ribosomal subunit protein uS7 from Chlorobaculum parvum (strain DSM 263 / NCIMB 8327) (Chlorobium vibrioforme subsp. thiosulfatophilum).